The chain runs to 560 residues: Ubiquitin carboxyl-terminal hydrolase MINDY-3 homolog (560 aa).

Positions 1–13 are enriched in basic and acidic residues; that stretch reads MNEKIVREQRGGE. Disordered stretches follow at residues 1–30 and 44–91; these read MNEKIVREQRGGEDSPSSVSAKSATAAASA and SHKT…MLNA. Low complexity-rich tracts occupy residues 15-30 and 52-81; these read SPSSVSAKSATAAASA and TASSSPRTSGASASASSSSRSASAPASSSS. C139 (nucleophile) is an active-site residue. The interval 203–237 is disordered; it reads TEAGSTKKRSPAGEEESALAGQAAGSSEEVEEAAE. 2 positions are modified to phosphoserine: S212 and S219. Residue H403 is the Proton acceptor of the active site.

The protein belongs to the MINDY deubiquitinase family. FAM188 subfamily.

The catalysed reaction is Thiol-dependent hydrolysis of ester, thioester, amide, peptide and isopeptide bonds formed by the C-terminal Gly of ubiquitin (a 76-residue protein attached to proteins as an intracellular targeting signal).. In terms of biological role, hydrolase that can remove 'Lys-48'-linked conjugated ubiquitin from proteins. This is Ubiquitin carboxyl-terminal hydrolase MINDY-3 homolog (mindy3) from Drosophila melanogaster (Fruit fly).